We begin with the raw amino-acid sequence, 206 residues long: MARYIGPVGKISRRLGIGITEKGQRILAKRPFPPGQHGPSARRRQVSDYGLQLLEKQKARYIYGVLERQFRRIFEKAQRFPGETGAYLLILLERRLDNVVYRLGFATTRAQARQLVTHGHITVNGRKTNIPSYTVRVGETIAVRPESRRRMYFKNLVESGALAKHKAPDWLRLNPADLSGEVVAMPRREDAEPGINEQLIVEFYSR.

An S4 RNA-binding domain is found at 94–156 (RRLDNVVYRL…SRRRMYFKNL (63 aa)).

The protein belongs to the universal ribosomal protein uS4 family. In terms of assembly, part of the 30S ribosomal subunit. Contacts protein S5. The interaction surface between S4 and S5 is involved in control of translational fidelity.

Its function is as follows. One of the primary rRNA binding proteins, it binds directly to 16S rRNA where it nucleates assembly of the body of the 30S subunit. Functionally, with S5 and S12 plays an important role in translational accuracy. The protein is Small ribosomal subunit protein uS4 of Roseiflexus castenholzii (strain DSM 13941 / HLO8).